A 70-amino-acid polypeptide reads, in one-letter code: Small ribosomal subunit protein bS21 (70 aa).

The protein belongs to the bacterial ribosomal protein bS21 family.

The polypeptide is Small ribosomal subunit protein bS21 (Paracidovorax citrulli (strain AAC00-1) (Acidovorax citrulli)).